A 157-amino-acid chain; its full sequence is Small ribosomal subunit protein uS7 (157 aa).

This sequence belongs to the universal ribosomal protein uS7 family. In terms of assembly, part of the 30S ribosomal subunit. Contacts proteins S9 and S11.

Its function is as follows. One of the primary rRNA binding proteins, it binds directly to 16S rRNA where it nucleates assembly of the head domain of the 30S subunit. Is located at the subunit interface close to the decoding center, probably blocks exit of the E-site tRNA. This chain is Small ribosomal subunit protein uS7, found in Opitutus terrae (strain DSM 11246 / JCM 15787 / PB90-1).